The primary structure comprises 218 residues: Methylthioribulose-1-phosphate dehydratase (218 aa).

The Zn(2+) site is built by H107 and H109.

The protein belongs to the aldolase class II family. MtnB subfamily. Requires Zn(2+) as cofactor.

The enzyme catalyses 5-(methylsulfanyl)-D-ribulose 1-phosphate = 5-methylsulfanyl-2,3-dioxopentyl phosphate + H2O. It participates in amino-acid biosynthesis; L-methionine biosynthesis via salvage pathway; L-methionine from S-methyl-5-thio-alpha-D-ribose 1-phosphate: step 2/6. In terms of biological role, catalyzes the dehydration of methylthioribulose-1-phosphate (MTRu-1-P) into 2,3-diketo-5-methylthiopentyl-1-phosphate (DK-MTP-1-P). The polypeptide is Methylthioribulose-1-phosphate dehydratase (Xylella fastidiosa (strain M12)).